A 260-amino-acid chain; its full sequence is NH(3)-dependent NAD(+) synthetase (260 aa).

31–38 (GLSGGLDS) provides a ligand contact to ATP. Mg(2+) is bound at residue D37. R112 lines the deamido-NAD(+) pocket. Residue T132 coordinates ATP. E137 is a Mg(2+) binding site. ATP is bound by residues K161 and S183.

The protein belongs to the NAD synthetase family. In terms of assembly, homodimer.

It carries out the reaction deamido-NAD(+) + NH4(+) + ATP = AMP + diphosphate + NAD(+) + H(+). The protein operates within cofactor biosynthesis; NAD(+) biosynthesis; NAD(+) from deamido-NAD(+) (ammonia route): step 1/1. Its function is as follows. Catalyzes the ATP-dependent amidation of deamido-NAD to form NAD. Uses ammonia as a nitrogen source. In Helicobacter acinonychis (strain Sheeba), this protein is NH(3)-dependent NAD(+) synthetase.